A 68-amino-acid polypeptide reads, in one-letter code: DNA-directed RNA polymerase subunit omega (68 aa).

Belongs to the RNA polymerase subunit omega family. The RNAP catalytic core consists of 2 alpha, 1 beta, 1 beta' and 1 omega subunit. When a sigma factor is associated with the core the holoenzyme is formed, which can initiate transcription.

The enzyme catalyses RNA(n) + a ribonucleoside 5'-triphosphate = RNA(n+1) + diphosphate. In terms of biological role, promotes RNA polymerase assembly. Latches the N- and C-terminal regions of the beta' subunit thereby facilitating its interaction with the beta and alpha subunits. This is DNA-directed RNA polymerase subunit omega from Desulfitobacterium hafniense (strain DSM 10664 / DCB-2).